Here is a 248-residue protein sequence, read N- to C-terminus: 1-(5-phosphoribosyl)-5-[(5-phosphoribosylamino)methylideneamino] imidazole-4-carboxamide isomerase (248 aa).

Catalysis depends on Asp-8, which acts as the Proton acceptor. Asp-131 (proton donor) is an active-site residue.

It belongs to the HisA/HisF family.

The protein localises to the cytoplasm. The enzyme catalyses 1-(5-phospho-beta-D-ribosyl)-5-[(5-phospho-beta-D-ribosylamino)methylideneamino]imidazole-4-carboxamide = 5-[(5-phospho-1-deoxy-D-ribulos-1-ylimino)methylamino]-1-(5-phospho-beta-D-ribosyl)imidazole-4-carboxamide. It participates in amino-acid biosynthesis; L-histidine biosynthesis; L-histidine from 5-phospho-alpha-D-ribose 1-diphosphate: step 4/9. In Cupriavidus taiwanensis (strain DSM 17343 / BCRC 17206 / CCUG 44338 / CIP 107171 / LMG 19424 / R1) (Ralstonia taiwanensis (strain LMG 19424)), this protein is 1-(5-phosphoribosyl)-5-[(5-phosphoribosylamino)methylideneamino] imidazole-4-carboxamide isomerase.